A 123-amino-acid polypeptide reads, in one-letter code: Large ribosomal subunit protein bL20 (123 aa).

Belongs to the bacterial ribosomal protein bL20 family.

In terms of biological role, binds directly to 23S ribosomal RNA and is necessary for the in vitro assembly process of the 50S ribosomal subunit. It is not involved in the protein synthesizing functions of that subunit. The sequence is that of Large ribosomal subunit protein bL20 from Ehrlichia ruminantium (strain Gardel).